Consider the following 353-residue polypeptide: uncharacterized protein (353 aa).

The signal sequence occupies residues Met-1–Ala-23.

It to E.coli YqiI.

Its function is as follows. May be involved in a fimbrial system chaperoned by YbgP and exported by YbgQ. This is an uncharacterized protein from Escherichia coli (strain K12).